The sequence spans 106 residues: Pyrimidine/purine nucleoside phosphorylase (106 aa).

It belongs to the nucleoside phosphorylase PpnP family.

It carries out the reaction a purine D-ribonucleoside + phosphate = a purine nucleobase + alpha-D-ribose 1-phosphate. The catalysed reaction is adenosine + phosphate = alpha-D-ribose 1-phosphate + adenine. It catalyses the reaction cytidine + phosphate = cytosine + alpha-D-ribose 1-phosphate. The enzyme catalyses guanosine + phosphate = alpha-D-ribose 1-phosphate + guanine. It carries out the reaction inosine + phosphate = alpha-D-ribose 1-phosphate + hypoxanthine. The catalysed reaction is thymidine + phosphate = 2-deoxy-alpha-D-ribose 1-phosphate + thymine. It catalyses the reaction uridine + phosphate = alpha-D-ribose 1-phosphate + uracil. The enzyme catalyses xanthosine + phosphate = alpha-D-ribose 1-phosphate + xanthine. Its function is as follows. Catalyzes the phosphorolysis of diverse nucleosides, yielding D-ribose 1-phosphate and the respective free bases. Can use uridine, adenosine, guanosine, cytidine, thymidine, inosine and xanthosine as substrates. Also catalyzes the reverse reactions. The sequence is that of Pyrimidine/purine nucleoside phosphorylase from Leptospira interrogans serogroup Icterohaemorrhagiae serovar copenhageni (strain Fiocruz L1-130).